We begin with the raw amino-acid sequence, 67 residues long: ATP synthase F(0) complex subunit 8 (67 aa).

The helical transmembrane segment at 8-24 (TWFTVILSMIISLFMLL) threads the bilayer. Lys54 is modified (N6-acetyllysine; alternate). At Lys54 the chain carries N6-succinyllysine; alternate. Lys57 is modified (N6-acetyllysine).

The protein belongs to the ATPase protein 8 family. As to quaternary structure, component of the ATP synthase complex composed at least of ATP5F1A/subunit alpha, ATP5F1B/subunit beta, ATP5MC1/subunit c (homooctomer), MT-ATP6/subunit a, MT-ATP8/subunit 8, ATP5ME/subunit e, ATP5MF/subunit f, ATP5MG/subunit g, ATP5MK/subunit k, ATP5MJ/subunit j, ATP5F1C/subunit gamma, ATP5F1D/subunit delta, ATP5F1E/subunit epsilon, ATP5PF/subunit F6, ATP5PB/subunit b, ATP5PD/subunit d, ATP5PO/subunit OSCP. ATP synthase complex consists of a soluble F(1) head domain (subunits alpha(3) and beta(3)) - the catalytic core - and a membrane F(0) domain - the membrane proton channel (subunits c, a, 8, e, f, g, k and j). These two domains are linked by a central stalk (subunits gamma, delta, and epsilon) rotating inside the F1 region and a stationary peripheral stalk (subunits F6, b, d, and OSCP). Interacts with PRICKLE3.

It is found in the mitochondrion membrane. Its function is as follows. Subunit 8, of the mitochondrial membrane ATP synthase complex (F(1)F(0) ATP synthase or Complex V) that produces ATP from ADP in the presence of a proton gradient across the membrane which is generated by electron transport complexes of the respiratory chain. ATP synthase complex consist of a soluble F(1) head domain - the catalytic core - and a membrane F(1) domain - the membrane proton channel. These two domains are linked by a central stalk rotating inside the F(1) region and a stationary peripheral stalk. During catalysis, ATP synthesis in the catalytic domain of F(1) is coupled via a rotary mechanism of the central stalk subunits to proton translocation. In vivo, can only synthesize ATP although its ATP hydrolase activity can be activated artificially in vitro. Part of the complex F(0) domain. The polypeptide is ATP synthase F(0) complex subunit 8 (Cavia porcellus (Guinea pig)).